A 229-amino-acid polypeptide reads, in one-letter code: uncharacterized protein (229 aa).

Residues 66–94 adopt a coiled-coil conformation; sequence GHEKLQIQSALRDIESAENQARVQQCNAK.

This is an uncharacterized protein from Ostreid herpesvirus 1 (isolate France) (OsHV-1).